The primary structure comprises 857 residues: Bifunctional uridylyltransferase/uridylyl-removing enzyme (857 aa).

A uridylyltransferase region spans residues methionine 1 to glutamate 322. The interval isoleucine 323 to leucine 679 is uridylyl-removing. The region spanning valine 441 to leucine 563 is the HD domain. 2 ACT domains span residues glutamine 680 to glutamine 760 and leucine 788 to isoleucine 857.

Belongs to the GlnD family. It depends on Mg(2+) as a cofactor.

It catalyses the reaction [protein-PII]-L-tyrosine + UTP = [protein-PII]-uridylyl-L-tyrosine + diphosphate. It carries out the reaction [protein-PII]-uridylyl-L-tyrosine + H2O = [protein-PII]-L-tyrosine + UMP + H(+). Uridylyltransferase (UTase) activity is inhibited by glutamine, while glutamine activates uridylyl-removing (UR) activity. Its function is as follows. Modifies, by uridylylation and deuridylylation, the PII regulatory proteins (GlnB and homologs), in response to the nitrogen status of the cell that GlnD senses through the glutamine level. Under low glutamine levels, catalyzes the conversion of the PII proteins and UTP to PII-UMP and PPi, while under higher glutamine levels, GlnD hydrolyzes PII-UMP to PII and UMP (deuridylylation). Thus, controls uridylylation state and activity of the PII proteins, and plays an important role in the regulation of nitrogen assimilation and metabolism. This chain is Bifunctional uridylyltransferase/uridylyl-removing enzyme, found in Cupriavidus metallidurans (strain ATCC 43123 / DSM 2839 / NBRC 102507 / CH34) (Ralstonia metallidurans).